We begin with the raw amino-acid sequence, 611 residues long: Phosphatidylinositol 3,4,5-trisphosphate 3-phosphatase and protein-tyrosine-phosphatase PTEN2A (611 aa).

Disordered regions lie at residues 1 to 42 (MSSE…GVAS) and 87 to 109 (GIRL…SSAT). Phosphoserine is present on serine 91. Residues 100–109 (TTTEGTSSAT) show a composition bias toward low complexity. The 180-residue stretch at 145–324 (RRYQEGGFDL…KYFERILTYF (180 aa)) folds into the Phosphatase tensin-type domain. The Phosphocysteine intermediate role is filled by cysteine 263. One can recognise a C2 tensin-type domain in the interval 331-458 (GRRCMLRGFR…FMVEVVLADI (128 aa)). A compositionally biased stretch (polar residues) spans 462-486 (IPTNPSSETASKTPEETSAANSSPV). A disordered region spans residues 462–589 (IPTNPSSETA…VNASSSSESE (128 aa)). The segment covering 495-507 (PDKETENPDKDDV) has biased composition (basic and acidic residues). A Phosphoserine modification is found at serine 509. Composition is skewed to polar residues over residues 514-530 (DSTG…SQTP) and 549-565 (VSIS…QGVT).

Belongs to the PTEN phosphatase protein family. In terms of tissue distribution, expressed in seedlings, roots, stems, leaves, flowers and siliques. However, at protein level, not observed in older leaves and mature siliques.

It catalyses the reaction O-phospho-L-tyrosyl-[protein] + H2O = L-tyrosyl-[protein] + phosphate. The enzyme catalyses a 1,2-diacyl-sn-glycero-3-phospho-(1D-myo-inositol-3,4,5-trisphosphate) + H2O = a 1,2-diacyl-sn-glycero-3-phospho-(1D-myo-inositol-4,5-bisphosphate) + phosphate. Functionally, binds phosphatidic acid. Protein tyrosine phosphatase that also exhibits lipid phosphatase activity. Hydrolyzed poorly p-nitrophenyl phosphate (p-NPP). Can use PtdIns isomers as substrates. Removes efficiently phosphate from the D3 position of the inositol ring, less from the D4 position and not at all from the D5 position on monophosphorylated PtdIns isomers (PIPs). The presence of a phosphate group in the D5 position on PIP(2) isomers reduces lipid phosphatase activity. Mostly active on PtdIns(3)P and PtdIns(3,4)P(2), to a lower extent, on PtdIns(4)P and PtdIns(3,5)P(2), but barely against PtdIns(3,4,5)P(3) as substrate. The polypeptide is Phosphatidylinositol 3,4,5-trisphosphate 3-phosphatase and protein-tyrosine-phosphatase PTEN2A (Arabidopsis thaliana (Mouse-ear cress)).